The chain runs to 339 residues: D-erythrose-4-phosphate dehydrogenase (339 aa).

NAD(+) is bound at residue R11–I12. Residues S153–T155, R199, T212–K213, and R235 contribute to the substrate site. Catalysis depends on C154, which acts as the Nucleophile. Residue N317 participates in NAD(+) binding.

This sequence belongs to the glyceraldehyde-3-phosphate dehydrogenase family. Epd subfamily. In terms of assembly, homotetramer.

It is found in the cytoplasm. It catalyses the reaction D-erythrose 4-phosphate + NAD(+) + H2O = 4-phospho-D-erythronate + NADH + 2 H(+). It functions in the pathway cofactor biosynthesis; pyridoxine 5'-phosphate biosynthesis; pyridoxine 5'-phosphate from D-erythrose 4-phosphate: step 1/5. Catalyzes the NAD-dependent conversion of D-erythrose 4-phosphate to 4-phosphoerythronate. This chain is D-erythrose-4-phosphate dehydrogenase, found in Shewanella pealeana (strain ATCC 700345 / ANG-SQ1).